The sequence spans 358 residues: DNA replication and repair protein RecF (358 aa).

Position 30–37 (30–37) interacts with ATP; sequence GANGSGKT.

It belongs to the RecF family.

The protein localises to the cytoplasm. The RecF protein is involved in DNA metabolism; it is required for DNA replication and normal SOS inducibility. RecF binds preferentially to single-stranded, linear DNA. It also seems to bind ATP. This is DNA replication and repair protein RecF from Edwardsiella ictaluri (strain 93-146).